The sequence spans 288 residues: Alpha/beta hydrolase domain-containing protein 17B (288 aa).

Residues S170, D235, and H264 each act as charge relay system in the active site.

The protein belongs to the AB hydrolase superfamily. ABHD17 family. In terms of processing, palmitoylated on cysteine residues located in a cysteine cluster at the N-terminus which promotes membrane localization.

The protein resides in the cell membrane. The protein localises to the recycling endosome membrane. It localises to the cell projection. Its subcellular location is the dendritic spine. It is found in the postsynaptic density membrane. The catalysed reaction is S-hexadecanoyl-L-cysteinyl-[protein] + H2O = L-cysteinyl-[protein] + hexadecanoate + H(+). Hydrolyzes fatty acids from S-acylated cysteine residues in proteins. Has depalmitoylating activity towards NRAS. The sequence is that of Alpha/beta hydrolase domain-containing protein 17B from Gallus gallus (Chicken).